We begin with the raw amino-acid sequence, 308 residues long: Glucan 1,3-beta-glucosidase (308 aa).

A signal peptide spans 1–18 (MQIKFLTTLATVLTSVAA). The Proton donor role is filled by Glu119. N-linked (GlcNAc...) asparagine glycosylation is present at Asn197. Residue Glu228 is the Nucleophile of the active site.

The protein belongs to the glycosyl hydrolase 17 family.

It localises to the secreted. It is found in the cell wall. The enzyme catalyses Successive hydrolysis of beta-D-glucose units from the non-reducing ends of (1-&gt;3)-beta-D-glucans, releasing alpha-glucose.. The protein is Glucan 1,3-beta-glucosidase (BGL2) of Candida albicans (Yeast).